Reading from the N-terminus, the 122-residue chain is Insulin-like growth factor 1 (122 aa).

Residues 49–77 (GPETLCGAELVDALQFVCGDRGFYFNKPT) are b. Disulfide bonds link C54–C96, C66–C109, and C95–C100. Positions 78–89 (GYGSSSRRAPQT) are c. The a stretch occupies residues 90 to 110 (GIVDECCFRSCDLRRLEMYCA). Positions 111–118 (PLKPAKSA) are d. The propeptide at 119-122 (RSVR) is e peptide.

Belongs to the insulin family. In terms of assembly, forms a ternary complex with IGFR1 and ITGAV:ITGB3. Forms a ternary complex with IGFR1 and ITGA6:ITGB4. Forms a ternary complex with IGFBP3 and ALS.

Its subcellular location is the secreted. Functionally, the insulin-like growth factors, isolated from plasma, are structurally and functionally related to insulin but have a much higher growth-promoting activity. May be a physiological regulator of [1-14C]-2-deoxy-D-glucose (2DG) transport and glycogen synthesis in osteoblasts. Stimulates glucose transport in bone-derived osteoblastic (PyMS) cells and is effective at much lower concentrations than insulin, not only regarding glycogen and DNA synthesis but also with regard to enhancing glucose uptake. May play a role in synapse maturation. Ca(2+)-dependent exocytosis of IGF1 is required for sensory perception of smell in the olfactory bulb. Acts as a ligand for IGF1R. Binds to the alpha subunit of IGF1R, leading to the activation of the intrinsic tyrosine kinase activity which autophosphorylates tyrosine residues in the beta subunit thus initiating a cascade of down-stream signaling events leading to activation of the PI3K-AKT/PKB and the Ras-MAPK pathways. Binds to integrins ITGAV:ITGB3 and ITGA6:ITGB4. Its binding to integrins and subsequent ternary complex formation with integrins and IGFR1 are essential for IGF1 signaling. Induces the phosphorylation and activation of IGFR1, MAPK3/ERK1, MAPK1/ERK2 and AKT1. As part of the MAPK/ERK signaling pathway, acts as a negative regulator of apoptosis in cardiomyocytes via promotion of STUB1/CHIP-mediated ubiquitination and degradation of ICER-type isoforms of CREM. The chain is Insulin-like growth factor 1 from Equus caballus (Horse).